The chain runs to 227 residues: Cytochrome c oxidase subunit 2 (227 aa).

Residues 1–14 are Mitochondrial intermembrane-facing; that stretch reads MTHPLQLGFQDATS. The chain crosses the membrane as a helical span at residues 15–45; it reads PIMEELLHFHDHTLMIVFLISSLVLYIITLM. The Mitochondrial matrix segment spans residues 46–59; sequence LTTKLTHTSTMDAQ. Residues 60-87 form a helical membrane-spanning segment; the sequence is EVETVWTILPAIILILIALPSLRILYMM. Residues 88-227 are Mitochondrial intermembrane-facing; that stretch reads DEINNPLLTV…YFEDWSVSMT (140 aa). Positions 161, 196, 198, 200, 204, and 207 each coordinate Cu cation. Glutamate 198 serves as a coordination point for Mg(2+). Tyrosine 218 carries the phosphotyrosine modification.

Belongs to the cytochrome c oxidase subunit 2 family. As to quaternary structure, component of the cytochrome c oxidase (complex IV, CIV), a multisubunit enzyme composed of 14 subunits. The complex is composed of a catalytic core of 3 subunits MT-CO1, MT-CO2 and MT-CO3, encoded in the mitochondrial DNA, and 11 supernumerary subunits COX4I, COX5A, COX5B, COX6A, COX6B, COX6C, COX7A, COX7B, COX7C, COX8 and NDUFA4, which are encoded in the nuclear genome. The complex exists as a monomer or a dimer and forms supercomplexes (SCs) in the inner mitochondrial membrane with NADH-ubiquinone oxidoreductase (complex I, CI) and ubiquinol-cytochrome c oxidoreductase (cytochrome b-c1 complex, complex III, CIII), resulting in different assemblies (supercomplex SCI(1)III(2)IV(1) and megacomplex MCI(2)III(2)IV(2)). Found in a complex with TMEM177, COA6, COX18, COX20, SCO1 and SCO2. Interacts with TMEM177 in a COX20-dependent manner. Interacts with COX20. Interacts with COX16. Requires Cu cation as cofactor.

Its subcellular location is the mitochondrion inner membrane. The enzyme catalyses 4 Fe(II)-[cytochrome c] + O2 + 8 H(+)(in) = 4 Fe(III)-[cytochrome c] + 2 H2O + 4 H(+)(out). Its function is as follows. Component of the cytochrome c oxidase, the last enzyme in the mitochondrial electron transport chain which drives oxidative phosphorylation. The respiratory chain contains 3 multisubunit complexes succinate dehydrogenase (complex II, CII), ubiquinol-cytochrome c oxidoreductase (cytochrome b-c1 complex, complex III, CIII) and cytochrome c oxidase (complex IV, CIV), that cooperate to transfer electrons derived from NADH and succinate to molecular oxygen, creating an electrochemical gradient over the inner membrane that drives transmembrane transport and the ATP synthase. Cytochrome c oxidase is the component of the respiratory chain that catalyzes the reduction of oxygen to water. Electrons originating from reduced cytochrome c in the intermembrane space (IMS) are transferred via the dinuclear copper A center (CU(A)) of subunit 2 and heme A of subunit 1 to the active site in subunit 1, a binuclear center (BNC) formed by heme A3 and copper B (CU(B)). The BNC reduces molecular oxygen to 2 water molecules using 4 electrons from cytochrome c in the IMS and 4 protons from the mitochondrial matrix. In Carlito syrichta (Philippine tarsier), this protein is Cytochrome c oxidase subunit 2 (MT-CO2).